The sequence spans 357 residues: Homoarginine-6-hydroxylase 2-ODD-C23.2 (357 aa).

One can recognise a Fe2OG dioxygenase domain in the interval 208-308 (PFWVMRIIGY…RVCVAFFYET (101 aa)). Residues H231, D233, and H289 each contribute to the Fe cation site. 2-oxoglutarate is bound at residue R299.

It belongs to the iron/ascorbate-dependent oxidoreductase family. Fe(2+) is required as a cofactor. In terms of tissue distribution, expressed in senescent leaves.

The protein resides in the cytoplasm. The protein localises to the cytosol. The catalysed reaction is L-homoarginine + 2-oxoglutarate + O2 = 6-hydroxy-L-homoarginine + succinate + CO2. It catalyses the reaction L-arginine + 2-oxoglutarate + O2 = 5-hydroxy-L-arginine + succinate + CO2. Slightly inhibited by canavanine (Can), the 5-oxa-analog of arginine. 2-oxoglutarate-dependent dioxygenase catalyzing homoarginine 6-hydroxylation and arginine-5-hydroxylation thus producing 6-hydroxy-L-homoarginine and 5-hydroxy-L-arginine, respectively. Guanidine (Gd) is in turn synthesized by the spontaneous conversion of 6-hydroxy-L-homoarginine and 5-hydroxy-L-arginine to (S)-2-amino-6-oxohexanoate (RHEA:79843) and L-glutamate 5-semialdehyde (RHEA:31527); guanidine is a nitrogen-rich compound that may serve as a defense or signaling substance. This Arabidopsis thaliana (Mouse-ear cress) protein is Homoarginine-6-hydroxylase 2-ODD-C23.2.